Reading from the N-terminus, the 305-residue chain is tRNA N6-adenosine threonylcarbamoyltransferase (305 aa).

2 residues coordinate Fe cation: histidine 108 and histidine 112. Residues 130–134 (VVSGG), aspartate 163, glycine 176, aspartate 180, and asparagine 264 each bind substrate. Aspartate 288 serves as a coordination point for Fe cation.

This sequence belongs to the KAE1 / TsaD family. Fe(2+) is required as a cofactor.

It is found in the cytoplasm. The enzyme catalyses L-threonylcarbamoyladenylate + adenosine(37) in tRNA = N(6)-L-threonylcarbamoyladenosine(37) in tRNA + AMP + H(+). Functionally, required for the formation of a threonylcarbamoyl group on adenosine at position 37 (t(6)A37) in tRNAs that read codons beginning with adenine. Is involved in the transfer of the threonylcarbamoyl moiety of threonylcarbamoyl-AMP (TC-AMP) to the N6 group of A37, together with TsaE and TsaB. TsaD likely plays a direct catalytic role in this reaction. This chain is tRNA N6-adenosine threonylcarbamoyltransferase, found in Mycoplasma mobile (strain ATCC 43663 / 163K / NCTC 11711) (Mesomycoplasma mobile).